Reading from the N-terminus, the 344-residue chain is Tripartite motif-containing protein 44 (344 aa).

Disordered regions lie at residues 1–25 (MASG…EPDE) and 68–165 (TPPA…EFDP). The segment covering 75–92 (GAGKEEAEVKVEQEREIE) has biased composition (basic and acidic residues). Over residues 93 to 165 (SEAGEESESE…ETEAESEFDP (73 aa)) the composition is skewed to acidic residues. The B box-type zinc finger occupies 174–215 (VAKRKCPDHGLDLSTYCQEDRQLICVLCPVIGAHQGHQLSTL). Zn(2+) contacts are provided by Cys179, His182, Cys201, and His207. A coiled-coil region spans residues 290–325 (AHVTEILADIQSHMDRLMTQMAQAKEQLDTSNESAE). Residues 309-344 (QMAQAKEQLDTSNESAEPKAEGDEEGPSGASEEEDT) are disordered. Positions 330-344 (GDEEGPSGASEEEDT) are enriched in acidic residues. Residues Ser336 and Ser339 each carry the phosphoserine modification.

Interacts (via coiled coil) with TRIM17 (via coiled coil).

In terms of biological role, may play a role in the process of differentiation and maturation of neuronal cells. May regulate the activity of TRIM17. Is a negative regulator of PAX6 expression. In Pongo abelii (Sumatran orangutan), this protein is Tripartite motif-containing protein 44 (TRIM44).